We begin with the raw amino-acid sequence, 430 residues long: Delta(14)-sterol reductase (430 aa).

The next 6 membrane-spanning stretches (helical) occupy residues 12–32, 67–87, 109–129, 230–250, 267–287, and 290–310; these read IGTG…HFLI, LAVA…PAEI, FLVF…TWWF, FVSD…VDAL, LGVM…CLQA, and LASF…AVQF. Residues lysine 323, arginine 327, leucine 350, tryptophan 355, and 362 to 363 contribute to the NADP(+) site; that span reads NY. 2 consecutive transmembrane segments (helical) span residues 349–369 and 376–396; these read LLIS…DWIM and TTGF…ILLL. NADP(+) is bound by residues aspartate 402, 406 to 410, and tyrosine 417; that span reads CREKY.

It belongs to the ERG4/ERG24 family.

The protein localises to the membrane. The enzyme catalyses 4,4-dimethyl-5alpha-cholesta-8,24-dien-3beta-ol + NADP(+) = 4,4-dimethyl-5alpha-cholesta-8,14,24-trien-3beta-ol + NADPH + H(+). Its pathway is steroid biosynthesis; zymosterol biosynthesis; zymosterol from lanosterol: step 2/6. Reduces the C14=C15 double bond of 4,4-dimethyl-cholesta-8,14,24-trienol to produce 4,4-dimethyl-cholesta-8,24-dienol. The polypeptide is Delta(14)-sterol reductase (ERG3) (Ascobolus immersus).